Here is a 238-residue protein sequence, read N- to C-terminus: MSEVTTAEFNEEGKYLRKIRSFVLREGRLTKGQAQAIETQWPTMGLDYSPTPLNLTEVFGREADTVLEIGFGMGASLVQMAQEAPEQNFIGIEVHKPGVGSCLSDAAAAGVTNLRVYHHDAMEVLEHAIADGSLARVQLFFPDPWHKKRHHKRRIVQAEFAELIRRKLKIGGVFHMATDWENYSEHMLEVMNAANGYKNQSADGTVVPRPDHRPLTKFEARGHRLGHGVWDLMFERIA.

The S-adenosyl-L-methionine site is built by Glu68, Glu93, Asp120, and Asp143. The active site involves Asp143. Substrate contacts are provided by residues Lys147, Asp179, and 216–219 (TKFE).

It belongs to the class I-like SAM-binding methyltransferase superfamily. TrmB family.

It catalyses the reaction guanosine(46) in tRNA + S-adenosyl-L-methionine = N(7)-methylguanosine(46) in tRNA + S-adenosyl-L-homocysteine. The protein operates within tRNA modification; N(7)-methylguanine-tRNA biosynthesis. Functionally, catalyzes the formation of N(7)-methylguanine at position 46 (m7G46) in tRNA. This is tRNA (guanine-N(7)-)-methyltransferase from Shewanella sp. (strain MR-4).